Here is a 299-residue protein sequence, read N- to C-terminus: Glycine--tRNA ligase alpha subunit (299 aa).

This sequence belongs to the class-II aminoacyl-tRNA synthetase family. In terms of assembly, tetramer of two alpha and two beta subunits.

The protein localises to the cytoplasm. It catalyses the reaction tRNA(Gly) + glycine + ATP = glycyl-tRNA(Gly) + AMP + diphosphate. This is Glycine--tRNA ligase alpha subunit from Desulforapulum autotrophicum (strain ATCC 43914 / DSM 3382 / VKM B-1955 / HRM2) (Desulfobacterium autotrophicum).